We begin with the raw amino-acid sequence, 296 residues long: Glycine--tRNA ligase alpha subunit (296 aa).

Belongs to the class-II aminoacyl-tRNA synthetase family. As to quaternary structure, tetramer of two alpha and two beta subunits.

The protein resides in the cytoplasm. The enzyme catalyses tRNA(Gly) + glycine + ATP = glycyl-tRNA(Gly) + AMP + diphosphate. In Desulfitobacterium hafniense (strain Y51), this protein is Glycine--tRNA ligase alpha subunit.